The following is a 341-amino-acid chain: Tyrosine recombinase XerC (341 aa).

One can recognise a Core-binding (CB) domain in the interval 14 to 105 (PDAAEALERW…GVRSFFRWAD (92 aa)). Positions 126–309 (PLPRPLAADD…DAEHLLSVYE (184 aa)) constitute a Tyr recombinase domain. Residues arginine 169, lysine 193, histidine 261, arginine 264, and histidine 287 contribute to the active site. Tyrosine 296 (O-(3'-phospho-DNA)-tyrosine intermediate) is an active-site residue.

The protein belongs to the 'phage' integrase family. XerC subfamily. As to quaternary structure, forms a cyclic heterotetrameric complex composed of two molecules of XerC and two molecules of XerD.

Its subcellular location is the cytoplasm. Functionally, site-specific tyrosine recombinase, which acts by catalyzing the cutting and rejoining of the recombining DNA molecules. The XerC-XerD complex is essential to convert dimers of the bacterial chromosome into monomers to permit their segregation at cell division. It also contributes to the segregational stability of plasmids. The chain is Tyrosine recombinase XerC from Rhodospirillum centenum (strain ATCC 51521 / SW).